Consider the following 229-residue polypeptide: Uracil-DNA glycosylase (229 aa).

Asp70 acts as the Proton acceptor in catalysis.

It belongs to the uracil-DNA glycosylase (UDG) superfamily. UNG family.

The protein resides in the cytoplasm. It catalyses the reaction Hydrolyzes single-stranded DNA or mismatched double-stranded DNA and polynucleotides, releasing free uracil.. Functionally, excises uracil residues from the DNA which can arise as a result of misincorporation of dUMP residues by DNA polymerase or due to deamination of cytosine. The protein is Uracil-DNA glycosylase of Chlamydia trachomatis serovar L2b (strain UCH-1/proctitis).